An 817-amino-acid polypeptide reads, in one-letter code: CD177 antigen (817 aa).

The N-terminal stretch at 1 to 21 (MNSIPVLTLLGVTALLPCVPA) is a signal peptide. The Extracellular portion of the chain corresponds to 22–796 (LTCQKSSAQA…PSLAWTLRLS (775 aa)). N-linked (GlcNAc...) asparagine glycans are attached at residues Asn-115, Asn-189, Asn-379, and Asn-566. UPAR/Ly6 domains lie at 134–203 (CPLC…SENC), 322–393 (CRHC…REDC), 511–581 (CPLC…ERCS), and 705–774 (CPMC…AEES). A helical; Anchor for type IV membrane protein membrane pass occupies residues 797–817 (AWMLGLSALLSSLYAGICPLC).

In terms of assembly, found in a complex with integrin ITGAM/CD11b and ITGB2/CD18. Interacts with PECAM1 (via Ig-like C2-type domain 6); the interaction is Ca(2+)-dependent; the interaction is direct. Interacts with serine protease PRTN3/myeloblastin; the interaction tethers PRTN3 to the cell surface; the interaction is direct. In terms of tissue distribution, expressed in neutrophils.

Its subcellular location is the cell membrane. In terms of biological role, in association with beta-2 integrin heterodimer ITGAM/CD11b and ITGB2/CD18, mediates activation of TNF-alpha primed neutrophils including degranulation and superoxide production. In addition, by preventing beta-2 integrin internalization and attenuating chemokine signaling favors adhesion over migration. Heterophilic interaction with PECAM1 on endothelial cells plays a role in neutrophil transendothelial migration in vitro. However, appears to be dispensable for neutrophil recruitment caused by bacterial infection in vivo. Acts as a receptor for the mature form of protease PRTN3 allowing its display at the cell surface of neutrophils. By displaying PRTN3 at the neutrophil cell surface, may play a role in enhancing endothelial cell junctional integrity and thus vascular integrity during neutrophil diapedesis. This Mus musculus (Mouse) protein is CD177 antigen (Cd177).